Consider the following 313-residue polypeptide: Porphobilinogen deaminase (313 aa).

An S-(dipyrrolylmethanemethyl)cysteine modification is found at Cys-242.

The protein belongs to the HMBS family. As to quaternary structure, monomer. Dipyrromethane is required as a cofactor.

The enzyme catalyses 4 porphobilinogen + H2O = hydroxymethylbilane + 4 NH4(+). It functions in the pathway porphyrin-containing compound metabolism; protoporphyrin-IX biosynthesis; coproporphyrinogen-III from 5-aminolevulinate: step 2/4. Its function is as follows. Tetrapolymerization of the monopyrrole PBG into the hydroxymethylbilane pre-uroporphyrinogen in several discrete steps. This Salmonella arizonae (strain ATCC BAA-731 / CDC346-86 / RSK2980) protein is Porphobilinogen deaminase.